The sequence spans 309 residues: uncharacterized protein (309 aa).

2 disordered regions span residues 1-94 (IGEV…RQQI) and 286-309 (HTRNSKFHPPAKNTPPPLEDPPRG). Residues 30–43 (PAQPPSPAPTPSRT) show a composition bias toward pro residues. Over residues 58-67 (RSKTPDKRSA) the composition is skewed to basic and acidic residues. The span at 297-309 (KNTPPPLEDPPRG) shows a compositional bias: pro residues.

This is an uncharacterized protein from Homo sapiens (Human).